The sequence spans 307 residues: Putative flagellar export/assembly protein LafU (307 aa).

A helical membrane pass occupies residues 32 to 54 (AWKVAFADFTLAMMALFMTLWIV). The segment at 87 to 108 (SPSHPPKPATVAAPEETEKKAR) is disordered. In terms of domain architecture, OmpA-like spans 154–272 (LRVLIKDDQN…RIEIMVLTKS (119 aa)).

It belongs to the MotB family.

Its subcellular location is the cell inner membrane. Part of the flagellar gene cluster Flag-2. However, the Flag-2 flagellar system could be inactive in strain 042 due to a frameshift in lfgC. This chain is Putative flagellar export/assembly protein LafU, found in Escherichia coli O44:H18 (strain 042 / EAEC).